Reading from the N-terminus, the 110-residue chain is Class I hydrophobin 2 (110 aa).

Positions 1–19 (MFARAASVFVLSLPILATA) are cleaved as a signal peptide. Intrachain disulfides connect Cys29–Cys89, Cys36–Cys83, Cys37–Cys70, and Cys90–Cys103.

The protein belongs to the fungal hydrophobin family. As to quaternary structure, self-assembles to form functional amyloid fibrils called rodlets. Self-assembly into fibrillar rodlets occurs spontaneously at hydrophobic:hydrophilic interfaces and the rodlets further associate laterally to form amphipathic monolayers.

It is found in the secreted. Its subcellular location is the cell wall. Aerial growth, conidiation, and dispersal of filamentous fungi in the environment rely upon a capability of their secreting small amphipathic proteins called hydrophobins (HPBs) with low sequence identity. Class I can self-assemble into an outermost layer of rodlet bundles on aerial cell surfaces, conferring cellular hydrophobicity that supports fungal growth, development and dispersal; whereas Class II form highly ordered films at water-air interfaces through intermolecular interactions but contribute nothing to the rodlet structure. Pnh2 is a class I hydrophobin that might be involved in the attachment of the hydrophilic wall of hyphae to the hydrophobic surface of wood under inorganic phosphate (Pi)-deficient conditions and enable the mycelium to degrade efficiently the components of wood and to acquire nutrients containing Pi. This is Class I hydrophobin 2 from Pholiota nameko.